The sequence spans 303 residues: Caspase-7 (303 aa).

A disordered region spans residues 1-27 (MADDQNCAPELEKADPSGEDGVDAKPD). Ala2 carries the N-acetylalanine modification. A propeptide spans 2 to 23 (ADDQNCAPELEKADPSGEDGVD) (N-terminally processed). Positions 10–27 (ELEKADPSGEDGVDAKPD) are enriched in basic and acidic residues. A Phosphoserine modification is found at Ser30. The interval 38–41 (KKKK) is exosite. Residues 76–87 (KNFDKVTGMDVR) form a loop L1 region. His144 is a catalytic residue. Thr173 bears the Phosphothreonine mark. The active site involves Cys186. The segment at 187–196 (RGTELDDGVQ) is loop L2. Positions 199-206 (SGPINETD) are excised as a propeptide. The interval 226-238 (VPGYYSWRNPGKG) is loop L3. Ser239 carries the phosphoserine modification. The interval 274–288 (ESQCDDPCFNEKKQI) is loop L4.

Belongs to the peptidase C14A family. As to quaternary structure, heterotetramer that consists of two anti-parallel arranged heterodimers, each one formed by a 20 kDa (p20) and a 11 kDa (p11) subunit. Interacts with XIAP (via its second BIR domain); inhibiting CASP7 activity. Interacts with BIRC6/bruce. Interacts with ATXN3 (short isoform 1). Interacts with HSPA5. Cleavage by different proteases, such as granzyme B (GZMB), caspase-1 (CASP1), caspase-8 (CASP8) or caspase-9 (CASP9) generate the two active subunits. Its involvement in different programmed cell death processes is probably specified by the protease that activates CASP7. Cleaved and activated by initiator caspases (CASP8 and/or CASP9), leading to execution phase of apoptosis. Cleavage and maturation by GZMB regulates granzyme-mediated programmed cell death. Cleaved and activated by CASP1 in response to bacterial infection. Propeptide domains can also be cleaved efficiently by CASP3. Active heterodimers between the small subunit of caspase-7 and the large subunit of CASP3, and vice versa, also occur. Also cleaved at the N-terminus at alternative sites by CAPN1, leading to its activation. Post-translationally, phosphorylation at Ser-30 and Ser-239 by PAK2 inhibits its activity. Phosphorylation at Ser-30 prevents cleavage and activation by initiator caspase CASP9, while phosphorylation at Ser-239 prevents thiol protease activity by preventing substrate-binding. In terms of processing, ubiquitinated by BIRC6; this activity is inhibited by DIABLO/SMAC.

The protein localises to the cytoplasm. It localises to the cytosol. It is found in the nucleus. Its subcellular location is the secreted. The protein resides in the extracellular space. The catalysed reaction is Strict requirement for an Asp residue at position P1 and has a preferred cleavage sequence of Asp-Glu-Val-Asp-|-.. During activation, the N-terminal disordered prodomain is removed by cleavage. Concomitantly, double cleavage gives rise to a large Caspase-7 subunit p20 and a small Caspase-7 subunit p11. The two large and two small subunits then assemble to form the active CASP7 complex. Can be cleaved and activated by different caspases, depending on the context. Cleaved and activated by initiator caspases (CASP8 and/or CASP9), leading to execution phase of apoptosis. Cleavage and maturation by GZMB regulates granzyme-mediated programmed cell death. Cleavage and maturation by CASP1 regulates pyroptosis. Inhibited by XIAP, which directly binds to the active site pocket and obstructs substrate entry. Phosphorylation at Ser-30 and Ser-239 by PAK2 inhibits its activity. Inhibited by BIRC6; following inhibition of BIRC6-caspase binding by DIABLO/SMAC, BIRC6 is subjected to caspase cleavage, leading to an increase in active caspases. Functionally, thiol protease involved in different programmed cell death processes, such as apoptosis, pyroptosis or granzyme-mediated programmed cell death, by proteolytically cleaving target proteins. Has a marked preference for Asp-Glu-Val-Asp (DEVD) consensus sequences, with some plasticity for alternate non-canonical sequences. Its involvement in the different programmed cell death processes is probably determined by upstream proteases that activate CASP7. Acts as an effector caspase involved in the execution phase of apoptosis: following cleavage and activation by initiator caspases (CASP8 and/or CASP9), mediates execution of apoptosis by catalyzing cleavage of proteins, such as CLSPN, PARP1, PTGES3 and YY1. Compared to CASP3, acts as a minor executioner caspase and cleaves a limited set of target proteins. Acts as a key regulator of the inflammatory response in response to bacterial infection by catalyzing cleavage and activation of the sphingomyelin phosphodiesterase SMPD1 in the extracellular milieu, thereby promoting membrane repair. Regulates pyroptosis in intestinal epithelial cells: cleaved and activated by CASP1 in response to S.typhimurium infection, promoting its secretion to the extracellular milieu, where it catalyzes activation of SMPD1, generating ceramides that repair membranes and counteract the action of gasdermin-D (GSDMD) pores. Regulates granzyme-mediated programmed cell death in hepatocytes: cleaved and activated by granzyme B (GZMB) in response to bacterial infection, promoting its secretion to the extracellular milieu, where it catalyzes activation of SMPD1, generating ceramides that repair membranes and counteract the action of perforin (PRF1) pores. Following cleavage by CASP1 in response to inflammasome activation, catalyzes processing and inactivation of PARP1, alleviating the transcription repressor activity of PARP1. Acts as an inhibitor of type I interferon production during virus-induced apoptosis by mediating cleavage of antiviral proteins CGAS, IRF3 and MAVS, thereby preventing cytokine overproduction. Cleaves and activates sterol regulatory element binding proteins (SREBPs). Cleaves phospholipid scramblase proteins XKR4, XKR8 and XKR9. Cleaves BIRC6 following inhibition of BIRC6-caspase binding by DIABLO/SMAC. The sequence is that of Caspase-7 (CASP7) from Mesocricetus auratus (Golden hamster).